Consider the following 797-residue polypeptide: Cleavage factor two protein 2 (797 aa).

Disordered stretches follow at residues 519–557 (ENDS…EVPS) and 677–703 (PSEE…KKEE). A compositionally biased stretch (basic and acidic residues) spans 684-703 (KEEVEKKDGDKERNEEKKEE).

As to quaternary structure, component of the cleavage and polyadenylation factor (CPF) complex, which is composed of cft1, cft2, ysh1, pta1, swd2, pfs2, dis2, yth1, ssu72, and fip1.

It is found in the nucleus. Its function is as follows. RNA-binding component of the cleavage and polyadenylation factor (CPF) complex, which plays a key role in polyadenylation-dependent pre-mRNA 3'-end formation and cooperates with cleavage factors including the CFIA complex and NAB4/CFIB. May be involved in poly(A)-site recognition. May be involved in the association of the CPF, CPFIA and RNA polymerase II complexes. This Schizosaccharomyces pombe (strain 972 / ATCC 24843) (Fission yeast) protein is Cleavage factor two protein 2 (cft2).